A 334-amino-acid chain; its full sequence is Dual specificity mitogen-activated protein kinase kinase 6 (334 aa).

Residues 1-11 (MSQSKGKKRNP) show a composition bias toward basic residues. Positions 1-34 (MSQSKGKKRNPGLKIPKEAFEQPQTSSTPPRDLD) are disordered. A d domain region spans residues 4 to 19 (SKGKKRNPGLKIPKEA). The Protein kinase domain maps to 53–314 (LEPIVELGRG…YPELMQHPFF (262 aa)). ATP contacts are provided by residues 59–67 (LGRGAYGVV) and K82. D179 acts as the Proton acceptor in catalysis. S207 carries the post-translational modification Phosphoserine; by MAPK3. T211 carries the post-translational modification Phosphothreonine; by MAPK3. The interval 311–334 (HPFFTLHESKATDVASFVKSILGD) is DVD domain.

This sequence belongs to the protein kinase superfamily. STE Ser/Thr protein kinase family. MAP kinase kinase subfamily. In terms of assembly, dimer. Interacts (via its D domain) with its substrates MAPK11, MAPK12, MAPK13 and MAPK14. Interacts (via its DVD domain) with MAP3Ks activators like MAP3K5/ASK1, MAP3K1/MEKK1, MAP3K2/MEKK2, MAP3K3/MEKK3, MAP3K4/MEKK4, MAP3K7/TAK1, MAP3K11/MLK3 and MAP3K17/TAOK2. Interacts with DCTN1. Interacts with EIF2AK2/PKR. Weakly autophosphorylated. Phosphorylated at Ser-207 and Thr-211 by the majority of M3Ks, such as MAP3K5/ASK1, MAP3K1/MEKK1, MAP3K2/MEKK2, MAP3K3/MEKK3, MAP3K4/MEKK4, MAP3K7/TAK1, MAP3K11/MLK3 and MAP3K17/TAOK2. In terms of processing, in response to genotoxic stress, MAP3K-phosphorylated MAP2K6 is ubiquitinated and degraded by the SCF(FBXO31) complex.

The protein resides in the nucleus. It is found in the cytoplasm. The protein localises to the cytoskeleton. It carries out the reaction L-seryl-[protein] + ATP = O-phospho-L-seryl-[protein] + ADP + H(+). The enzyme catalyses L-threonyl-[protein] + ATP = O-phospho-L-threonyl-[protein] + ADP + H(+). The catalysed reaction is L-tyrosyl-[protein] + ATP = O-phospho-L-tyrosyl-[protein] + ADP + H(+). Activated by dual phosphorylation on Ser-207 and Thr-211 in response to a variety of cellular stresses, including UV radiation, osmotic shock, hypoxia, inflammatory cytokines, interferon gamma (IFNG), and less often by growth factors. MAP2K6/MKK6 is activated by the majority of M3Ks, such as MAP3K5/ASK1, MAP3K1/MEKK1, MAP3K2/MEKK2, MAP3K3/MEKK3, MAP3K4/MEKK4, MAP3K7/TAK1, MAP3K11/MLK3 and MAP3K17/TAOK2. Its function is as follows. Dual specificity protein kinase which acts as an essential component of the MAP kinase signal transduction pathway. With MAP3K3/MKK3, catalyzes the concomitant phosphorylation of a threonine and a tyrosine residue in the MAP kinases p38 MAPK11, MAPK12, MAPK13 and MAPK14 and plays an important role in the regulation of cellular responses to cytokines and all kinds of stresses. Especially, MAP2K3/MKK3 and MAP2K6/MKK6 are both essential for the activation of MAPK11 and MAPK13 induced by environmental stress, whereas MAP2K6/MKK6 is the major MAPK11 activator in response to TNF. MAP2K6/MKK6 also phosphorylates and activates PAK6. The p38 MAP kinase signal transduction pathway leads to direct activation of transcription factors. Nuclear targets of p38 MAP kinase include the transcription factors ATF2 and ELK1. Within the p38 MAPK signal transduction pathway, MAP3K6/MKK6 mediates phosphorylation of STAT4 through MAPK14 activation, and is therefore required for STAT4 activation and STAT4-regulated gene expression in response to IL-12 stimulation. The pathway is also crucial for IL-6-induced SOCS3 expression and down-regulation of IL-6-mediated gene induction; and for IFNG-dependent gene transcription. Has a role in osteoclast differentiation through NF-kappa-B transactivation by TNFSF11, and in endochondral ossification and since SOX9 is another likely downstream target of the p38 MAPK pathway. MAP2K6/MKK6 mediates apoptotic cell death in thymocytes. Acts also as a regulator for melanocytes dendricity, through the modulation of Rho family GTPases. This is Dual specificity mitogen-activated protein kinase kinase 6 (MAP2K6) from Bos taurus (Bovine).